Consider the following 177-residue polypeptide: Phycocyanin PC645 beta subunit (177 aa).

Tyr18 is a binding site for mesobiliverdin. 3 residues coordinate (2R,3E)-phycocyanobilin: Lys28, Asn35, and Asp39. Residues Cys50, Asp54, and Cys61 each contribute to the 15,16-dihydrobiliverdin site. Residues Asn72, Arg77, Cys82, Arg84, and Asp85 each coordinate (2R,3E)-phycocyanobilin. Gln148 is a binding site for 15,16-dihydrobiliverdin. Positions 154, 156, and 158 each coordinate (2R,3E)-phycocyanobilin.

The protein belongs to the phycobiliprotein family. Heterotetramer of 2 different alpha chains and 2 identical beta chains which form 2 alpha-beta heterodimers within the heterotetramer. Post-translationally, contains two phycocyanobilin chromophores, one mesobiliverdin chromophore and one 15,16-dihydrobiliverdin chromophore with binding mediated by both the alpha and beta subunits.

The protein resides in the plastid. Its subcellular location is the chloroplast thylakoid membrane. Light-harvesting photosynthetic tetrapyrrole chromophore-protein from the phycobiliprotein complex. The protein is Phycocyanin PC645 beta subunit of Chroomonas sp. (strain CCMP270).